A 281-amino-acid chain; its full sequence is Eukaryotic translation initiation factor 3 subunit G (281 aa).

Residues 1–32 (MSRPAGRTDWAEEDDETELALPSQTVVKNKDG) form a disordered region. The RRM domain maps to 202–280 (ATLRVTNVSE…LILRVEFAKK (79 aa)).

This sequence belongs to the eIF-3 subunit G family. As to quaternary structure, component of the eukaryotic translation initiation factor 3 (eIF-3) complex.

The protein resides in the cytoplasm. Its function is as follows. RNA-binding component of the eukaryotic translation initiation factor 3 (eIF-3) complex, which is involved in protein synthesis of a specialized repertoire of mRNAs and, together with other initiation factors, stimulates binding of mRNA and methionyl-tRNAi to the 40S ribosome. The eIF-3 complex specifically targets and initiates translation of a subset of mRNAs involved in cell proliferation. This subunit can bind 18S rRNA. This Phaeosphaeria nodorum (strain SN15 / ATCC MYA-4574 / FGSC 10173) (Glume blotch fungus) protein is Eukaryotic translation initiation factor 3 subunit G.